Consider the following 117-residue polypeptide: Large ribosomal subunit protein bL19 (117 aa).

Belongs to the bacterial ribosomal protein bL19 family.

Functionally, this protein is located at the 30S-50S ribosomal subunit interface and may play a role in the structure and function of the aminoacyl-tRNA binding site. The sequence is that of Large ribosomal subunit protein bL19 from Shewanella baltica (strain OS155 / ATCC BAA-1091).